A 209-amino-acid chain; its full sequence is Small ribosomal subunit protein uS3 (209 aa).

A KH type-2 domain is found at 38–107; it reads IRKIIKNKYY…RVVINIEEIK (70 aa).

This sequence belongs to the universal ribosomal protein uS3 family. In terms of assembly, part of the 30S ribosomal subunit. Forms a tight complex with proteins S10 and S14.

In terms of biological role, binds the lower part of the 30S subunit head. Binds mRNA in the 70S ribosome, positioning it for translation. In Thermotoga maritima (strain ATCC 43589 / DSM 3109 / JCM 10099 / NBRC 100826 / MSB8), this protein is Small ribosomal subunit protein uS3.